We begin with the raw amino-acid sequence, 452 residues long: Probable V-type proton ATPase subunit H (452 aa).

Belongs to the V-ATPase H subunit family. V-ATPase is a heteromultimeric enzyme composed of a peripheral catalytic V1 complex (components A to H) attached to an integral membrane V0 proton pore complex (components: a, c, c', c'' and d).

In terms of biological role, subunit of the peripheral V1 complex of vacuolar ATPase. Subunit H activates the ATPase activity of the enzyme and couples ATPase activity to proton flow. Vacuolar ATPase is responsible for acidifying a variety of intracellular compartments in eukaryotic cells, thus providing most of the energy required for transport processes in the vacuolar system. The polypeptide is Probable V-type proton ATPase subunit H (Oryza sativa subsp. japonica (Rice)).